Here is a 1652-residue protein sequence, read N- to C-terminus: Maestro heat-like repeat-containing protein family member 1 (1652 aa).

HEAT repeat units follow at residues 3–41 (ETYA…SKPA), 260–300 (EEQL…VGSR), 344–382 (CCSP…AAAA), 385–423 (EVKK…HGYL), 1369–1407 (LMLL…GSPD), 1410–1448 (QTHS…LMDL), and 1616–1652 (QVDL…VKFA).

It belongs to the MROH1 family. As to quaternary structure, homooligomer; homooligomerizes at lysosome scission sites.

The protein localises to the lysosome membrane. Its function is as follows. Lysosome fission factor. Recruited to lysosomes by RAB7 (RAB7A or RAB7B) at scission sites and homooligomerizes to mediate the constriction and scission of lysosomal tubules. May sever membranes by inserting amphipathic helices into one bilayer leaflet. Lysosome fission is required to maintain their steady-state number, shape, size, composition and function, and to accomplish regeneration. In Bos taurus (Bovine), this protein is Maestro heat-like repeat-containing protein family member 1 (MROH1).